Consider the following 101-residue polypeptide: Urease subunit beta (101 aa).

This sequence belongs to the urease beta subunit family. Heterotrimer of UreA (gamma), UreB (beta) and UreC (alpha) subunits. Three heterotrimers associate to form the active enzyme.

The protein resides in the cytoplasm. The catalysed reaction is urea + 2 H2O + H(+) = hydrogencarbonate + 2 NH4(+). The protein operates within nitrogen metabolism; urea degradation; CO(2) and NH(3) from urea (urease route): step 1/1. This is Urease subunit beta from Ruegeria pomeroyi (strain ATCC 700808 / DSM 15171 / DSS-3) (Silicibacter pomeroyi).